We begin with the raw amino-acid sequence, 576 residues long: FtsZ-localized protein C (576 aa).

Interacts with FtsZ filaments.

The protein localises to the cytoplasm. The protein resides in the cell inner membrane. Functionally, membrane anchor for FtsZ. Binds and recruits FtsZ polymers to membranes early in the cell cycle. May also improve the efficiency of cytokinesis through the regulation of cell wall hydrolysis. This is FtsZ-localized protein C from Caulobacter vibrioides (strain NA1000 / CB15N) (Caulobacter crescentus).